Consider the following 309-residue polypeptide: Zinc transporter ZIP2 (309 aa).

At 1–8 the chain is on the extracellular side; sequence MEVLLGVK. The helical transmembrane segment at 9 to 29 threads the bilayer; sequence IGCLLALLVLTLGCGLTPIYV. Residues 30–43 are Cytoplasmic-facing; sequence KWFQMDAATGHHHR. A helical membrane pass occupies residues 44–64; that stretch reads VLSLLGCTSAGVFLGAGLMHM. The Extracellular segment spans residues 65–103; the sequence is TAEALEGIESEIQKFVEQNSTGSKGNSSRDAASSYVEYP. Residues 104-124 traverse the membrane as a helical segment; that stretch reads YGELVISLGFFFVFLLESLAL. Over 125–164 the chain is Cytoplasmic; the sequence is QCCHGAAGGSTVQEEEWGGTHAFGFHKHPAVPSPSRGPLR. Residues 165–185 traverse the membrane as a helical segment; the sequence is ALVLLLSLSFHSVFEGLAVGL. Zn(2+)-binding residues include His-175 and Glu-179. Residues 186–191 lie on the Extracellular side of the membrane; the sequence is QATVAA. The chain crosses the membrane as a helical span at residues 192–212; the sequence is TIQLCVAVLAHKGLVVFSVGL. His-202 is a binding site for Zn(2+). Residues 213-225 are Cytoplasmic-facing; sequence RLGKIGTGPRWAT. Residues 226–246 traverse the membrane as a helical segment; sequence FCILSLALMSPVGLALGLTVA. At 247–258 the chain is on the extracellular side; the sequence is GGASGQTQGLAQ. The chain crosses the membrane as a helical span at residues 259–279; the sequence is AVLEGIAAGTFLYVTFLEILP. Glu-276 contacts Zn(2+). Residues 280–288 are Cytoplasmic-facing; it reads RELACPEAP. The chain crosses the membrane as a helical span at residues 289–309; the sequence is LAKYSCVAAGFAFMALIALWA.

Belongs to the ZIP transporter (TC 2.A.5) family. In terms of tissue distribution, high expression in the liver, skin and ovary.

The protein resides in the cell membrane. The enzyme catalyses Zn(2+)(in) = Zn(2+)(out). It catalyses the reaction Cd(2+)(in) = Cd(2+)(out). Transporter for the divalent cation Zn(2+). Mediates the influx of Zn(2+) into cells from extracellular space. The Zn(2+) uniporter activity is independent of H(+)-driving force, but is modulated by extracellular pH and membrane potential. Transports also other divalent cations Zn(2+), Cd2(+), Cu2(+), Co2(+) in the order of decreasing affinity, respectively. In the skin, aids in the differentiation of keratinocytes in the epidermis. The sequence is that of Zinc transporter ZIP2 (Slc39a2) from Mus musculus (Mouse).